The following is a 482-amino-acid chain: G2/mitotic-specific cyclin cdc13 (482 aa).

Composition is skewed to polar residues over residues Leu-35–Val-55, Ser-78–Thr-92, and Ser-118–Thr-140. A disordered region spans residues Leu-35–Thr-140. The Cyclin N-terminal domain occupies Asp-206–Ala-332.

It belongs to the cyclin family. Cyclin AB subfamily. As to quaternary structure, interacts with cdc2. Interacts with rum1. Associates with microtubules. Also interacts with cdc11.

It localises to the nucleus. The protein resides in the cytoplasm. Its subcellular location is the cytoskeleton. It is found in the microtubule organizing center. The protein localises to the spindle pole body. Its function is as follows. Essential for the control of the cell cycle at the G2/M (mitosis) transition. Interacts with the cdc2 protein kinase to form MPF. G2/M cyclins accumulate steadily during G2 and are abruptly destroyed at mitosis. Involved in the reorganization of the cytoskeleton on transition from G2 to mitosis. Association with rum1 promotes its proteolysis during G1. Also essential for initiation of meiosis II. The chain is G2/mitotic-specific cyclin cdc13 from Schizosaccharomyces pombe (strain 972 / ATCC 24843) (Fission yeast).